A 498-amino-acid polypeptide reads, in one-letter code: Glycerol kinase (498 aa).

Thr11 lines the ADP pocket. Residues Thr11, Ser12, and Ser13 each coordinate ATP. Thr11 lines the sn-glycerol 3-phosphate pocket. Residue Arg15 coordinates ADP. Arg81, Glu82, Tyr133, and Asp242 together coordinate sn-glycerol 3-phosphate. The glycerol site is built by Arg81, Glu82, Tyr133, Asp242, and Gln243. ADP contacts are provided by Thr264 and Gly307. ATP-binding residues include Thr264, Gly307, Gln311, and Gly408. Residues Gly408 and Asn412 each coordinate ADP.

It belongs to the FGGY kinase family.

It carries out the reaction glycerol + ATP = sn-glycerol 3-phosphate + ADP + H(+). It functions in the pathway polyol metabolism; glycerol degradation via glycerol kinase pathway; sn-glycerol 3-phosphate from glycerol: step 1/1. Its activity is regulated as follows. Inhibited by fructose 1,6-bisphosphate (FBP). Key enzyme in the regulation of glycerol uptake and metabolism. Catalyzes the phosphorylation of glycerol to yield sn-glycerol 3-phosphate. This chain is Glycerol kinase, found in Ralstonia nicotianae (strain ATCC BAA-1114 / GMI1000) (Ralstonia solanacearum).